Here is a 158-residue protein sequence, read N- to C-terminus: MYMPLALVYASFLTLPASTSPATKGNVIQIQVHNIVNLAQTTVAHIRKLRMQLLMAPPIEITTPPIKGLASFSHYLKHLDNELQSPDTDLLSQIQADVSSLDGKVQSLGLMMNCPFQPRPTAEVSRFLFPDIHHYWTIAKVENYLESLHLNRDKLKVC.

Positions 1 to 19 (MYMPLALVYASFLTLPAST) are cleaved as a signal peptide. A disulfide bond links Cys114 and Cys158.

Belongs to the leptin family. Highly expressed in the brain and eye. Expressed at low levels in muscle and skin.

The protein localises to the secreted. In terms of biological role, may function as part of a signaling pathway that acts to regulate the size of the body fat depot. This chain is Leptin-B, found in Oryzias latipes (Japanese rice fish).